The primary structure comprises 92 residues: Small ribosomal subunit protein uS19 (92 aa).

Belongs to the universal ribosomal protein uS19 family.

In terms of biological role, protein S19 forms a complex with S13 that binds strongly to the 16S ribosomal RNA. This chain is Small ribosomal subunit protein uS19, found in Acholeplasma laidlawii (strain PG-8A).